Reading from the N-terminus, the 118-residue chain is MEGLLKLSTLVIVCMLVTAPMASEAAISCGAVTGSLGQCYNYLTRGGFIPRGCCSGVQRLNSLARTTRDRQQACRCIQGAARALGSRLNAGRAARLPGACRVRISYPISARTNCNTVR.

The signal sequence occupies residues 1-25 (MEGLLKLSTLVIVCMLVTAPMASEA). Intrachain disulfides connect Cys-29–Cys-76, Cys-39–Cys-53, Cys-54–Cys-100, and Cys-74–Cys-114.

The protein belongs to the plant LTP family.

Functionally, plant non-specific lipid-transfer proteins transfer phospholipids as well as galactolipids across membranes. May play a role in wax or cutin deposition in the cell walls of expanding epidermal cells and certain secretory tissues. The polypeptide is Non-specific lipid-transfer protein 5 (LTP5) (Arabidopsis thaliana (Mouse-ear cress)).